The primary structure comprises 628 residues: FAD-linked oxidoreductase easE (628 aa).

The N-terminal stretch at 1–20 (MSHRILCVAFCVCSLVAVSS) is a signal peptide. Residues 144 to 328 (HQGRIPLYSA…TRATMRVHLN (185 aa)) form the FAD-binding PCMH-type domain. Pros-8alpha-FAD histidine is present on His-182. N-linked (GlcNAc...) asparagine glycans are attached at residues Asn-343, Asn-382, and Asn-487.

Belongs to the oxygen-dependent FAD-linked oxidoreductase family. It depends on FAD as a cofactor.

It functions in the pathway alkaloid biosynthesis; ergot alkaloid biosynthesis. FAD binding oxidoreductase; part of the gene cluster that mediates the biosynthesis of fumiclavanine C, a fungal ergot alkaloid. DmaW catalyzes the first step of ergot alkaloid biosynthesis by condensing dimethylallyl diphosphate (DMAP) and tryptophan to form 4-dimethylallyl-L-tryptophan. The second step is catalyzed by the methyltransferase easF that methylates 4-dimethylallyl-L-tryptophan in the presence of S-adenosyl-L-methionine, resulting in the formation of 4-dimethylallyl-L-abrine. The catalase easC and the FAD-dependent oxidoreductase easE then transform 4-dimethylallyl-L-abrine to chanoclavine-I which is further oxidized by EasD in the presence of NAD(+), resulting in the formation of chanoclavine-I aldehyde. EasA reduces chanoclavine-I aldehyde to dihydrochanoclavine-I aldehyde that spontaneously dehydrates to form 6,8-dimethyl-6,7-didehydroergoline. EasG then catalyzes the reduction of 6,8-dimethyl-6,7-didehydroergoline to form festuclavine. Hydrolysis of festuclavine by easM then leads to the formation of fumigaclavine B which is in turn acetylated by easN to fumigaclavine A. Finally, easL catalyzes the conversion of fumigaclavine A into fumigaclavine C by attaching a dimethylallyl moiety to C-2 of the indole nucleus. This Aspergillus fumigatus (strain ATCC MYA-4609 / CBS 101355 / FGSC A1100 / Af293) (Neosartorya fumigata) protein is FAD-linked oxidoreductase easE.